Reading from the N-terminus, the 345-residue chain is UPF0228 protein MA_2656 (345 aa).

It belongs to the UPF0228 family.

This chain is UPF0228 protein MA_2656, found in Methanosarcina acetivorans (strain ATCC 35395 / DSM 2834 / JCM 12185 / C2A).